We begin with the raw amino-acid sequence, 648 residues long: Primary amine oxidase (648 aa).

Positions 1–9 (MTLNAESEA) are excised as a propeptide. A substrate-binding site is contributed by 299-310 (AFDSGEYNIGNM). The Proton acceptor role is filled by Asp301. A disulfide bond links Cys320 and Cys346. 382–387 (VANYEY) provides a ligand contact to substrate. Tyr385 (schiff-base intermediate with substrate; via topaquinone) is an active-site residue. Position 385 is a 2',4',5'-topaquinone (Tyr385). Cu cation is bound by residues His436 and His438. Mn(2+) is bound by residues Asp445, Phe446, and Asp584. His595 provides a ligand contact to Cu cation.

Belongs to the copper/topaquinone oxidase family. As to quaternary structure, homodimer. Cu cation serves as cofactor. Requires Zn(2+) as cofactor. The cofactor is L-topaquinone. It depends on Mn(2+) as a cofactor. In terms of processing, topaquinone (TPQ) is generated by copper-dependent autoxidation of a specific tyrosyl residue.

It carries out the reaction a primary methyl amine + O2 + H2O = an aldehyde + H2O2 + NH4(+). Its function is as follows. The exact function of MaoXI is not known. The protein is Primary amine oxidase (maoI) of Arthrobacter sp. (strain P1).